The chain runs to 403 residues: RILP-like protein 1 (403 aa).

Ser7 bears the Phosphoserine mark. Residues Ala10–Lys97 enclose the RH1 domain. Position 47 is an S-nitrosocysteine (Cys47). Positions Glu76–Glu265 form a coiled coil. Residues Arg291–Leu356 enclose the RH2 domain. Residues Glu329–Gln348 are disordered.

Belongs to the RILPL family. As to quaternary structure, interacts (when S-nitrosylated) with GAPDH. Interacts with RAB8A; interaction is dependent on the phosphorylation of 'Thr-72' of RAB8A. Interacts with RAB10 and RAB12; the interaction is dependent on the phosphorylation of 'Thr-73' of RAB10, and 'Ser-105' of RAB12. In terms of processing, S-nitrosylation is required for the interaction with GAPDH.

It localises to the cytoplasm. The protein resides in the cytosol. The protein localises to the cytoskeleton. Its subcellular location is the microtubule organizing center. It is found in the centrosome. It localises to the centriole. The protein resides in the cilium basal body. In terms of biological role, plays a role in the regulation of cell shape and polarity. Plays a role in cellular protein transport, including protein transport away from primary cilia. Neuroprotective protein, which acts by sequestring GAPDH in the cytosol and prevent the apoptotic function of GAPDH in the nucleus. Competes with SIAH1 for binding GAPDH. Does not regulate lysosomal morphology and distribution. Binds to RAB10 following LRRK2-mediated RAB10 phosphorylation which leads to inhibition of ciliogenesis. The chain is RILP-like protein 1 (RILPL1) from Bos taurus (Bovine).